A 479-amino-acid chain; its full sequence is T-box transcription factor TBX1 (479 aa).

2 stretches are compositionally biased toward low complexity: residues 15–31 (ASSLSGLGSPSPGADPF) and 59–86 (YPFAPAPGAAGSSAAESEGPGASRAAAV). The tract at residues 15–86 (ASSLSGLGSP…GPGASRAAAV (72 aa)) is disordered. The T-box DNA-binding region spans 108–286 (LWDEFNQLGT…SNPFAKGFRD (179 aa)). The tract at residues 311–398 (RNPVASPTQP…APGASEPLHH (88 aa)) is disordered. The span at 313–322 (PVASPTQPNG) shows a compositional bias: polar residues. A compositionally biased stretch (basic and acidic residues) spans 323 to 338 (SDKDAAEARREFDRDS). Residues 415 to 426 (KSRPAPYPLPGL) carry the Nuclear localization signal motif.

Binds DNA as a dimer. Interacts with DSCR6. Interacts with NKX2-5. As to expression, expressed in skeletal muscle, lung and testis. Highly expressed in hair follicle stem cell, but not in terminally differentiating cells.

The protein localises to the nucleus. Its function is as follows. Transcription factor that plays a key role in cardiovascular development by promoting pharyngeal arch segmentation during embryonic development. Also involved in craniofacial muscle development. Together with NKX2-5, acts as a regulator of asymmetric cardiac morphogenesis by promoting expression of PITX2. Acts upstream of TBX1 for the formation of the thymus and parathyroid glands from the third pharyngeal pouch. Required for hair follicle stem cell self-renewal. Binds to the palindromic T site 5'-TTCACACCTAGGTGTGAA-3' DNA sequence. The protein is T-box transcription factor TBX1 of Mus musculus (Mouse).